The chain runs to 216 residues: Outer-membrane lipoprotein LolB (216 aa).

The signal sequence occupies residues 1-21; that stretch reads MLIFKICFYRLLPLSVLLLAA. The N-palmitoyl cysteine moiety is linked to residue Cys-22. Residue Cys-22 is the site of S-diacylglycerol cysteine attachment.

It belongs to the LolB family. As to quaternary structure, monomer.

The protein localises to the cell outer membrane. In terms of biological role, plays a critical role in the incorporation of lipoproteins in the outer membrane after they are released by the LolA protein. This Hamiltonella defensa subsp. Acyrthosiphon pisum (strain 5AT) protein is Outer-membrane lipoprotein LolB.